Here is a 1372-residue protein sequence, read N- to C-terminus: Polysaccharide lyase 8 family protein HylA (1372 aa).

The N-terminal stretch at 1 to 25 is a signal peptide; sequence MIKKIIVVVAFMLTGFSLTAMSASA. One can recognise an F5/8 type C domain in the interval 63–172; sequence DGDETTRWSA…SIISFEAYEK (110 aa). The BIG2 domain maps to 183–242; sequence TENLTISEKRKQQLAFEVSPAGVDITEDQIEWSSSDPTIVTVDQTGNLTAVKSGEAKVTV. Residues histidine 487, tyrosine 496, and arginine 550 contribute to the active site. 4 consecutive FIVAR domains span residues 1014–1075, 1084–1146, 1155–1217, and 1226–1288; these read KEAL…VKQL, DKTN…VKQL, and DKTN…VKRL. The disordered stretch occupies residues 1288 to 1336; the sequence is LTLKNSGENKKEQKNGGNNGHLNTSTGVDQTGTKQVKPSSQGGFRKASQ. Polar residues predominate over residues 1308 to 1329; the sequence is HLNTSTGVDQTGTKQVKPSSQG. Positions 1338 to 1342 match the LPXTG sorting signal motif; that stretch reads LPSTG. The residue at position 1341 (threonine 1341) is a Pentaglycyl murein peptidoglycan amidated threonine. The propeptide at 1342–1372 is removed by sortase; sequence GEKKSIALVIIGLLVIASGCLLVFRKSKSKK.

Belongs to the polysaccharide lyase 8 family.

The protein localises to the secreted. It localises to the cell wall. Has a very modest degradation activity against heparin sodium salt (HS) in vitro. Involved in the pathogenesis of vancomycin-resistant E.faecalis infections. In Enterococcus faecalis (strain ATCC 700802 / V583), this protein is Polysaccharide lyase 8 family protein HylA.